A 492-amino-acid polypeptide reads, in one-letter code: GTPase Der (492 aa).

EngA-type G domains follow at residues 3 to 167 (FTLA…EKFE) and 207 to 382 (LQVA…DVWN). Residues 9 to 16 (GRPNVGKS), 56 to 60 (DSAGL), 119 to 122 (NKSE), 213 to 220 (GRPNAGKS), 260 to 264 (DTAGM), and 325 to 328 (NKWD) each bind GTP. Residues 383-469 (RRVPTAALNR…RLTLRGQGDK (87 aa)) form the KH-like domain. Residues 461-492 (LTLRGQGDKNPYKGKKKSTPSRLRKHLEGRKS) are disordered. The segment covering 472–492 (YKGKKKSTPSRLRKHLEGRKS) has biased composition (basic residues).

Belongs to the TRAFAC class TrmE-Era-EngA-EngB-Septin-like GTPase superfamily. EngA (Der) GTPase family. Associates with the 50S ribosomal subunit.

In terms of biological role, GTPase that plays an essential role in the late steps of ribosome biogenesis. The sequence is that of GTPase Der from Ruegeria sp. (strain TM1040) (Silicibacter sp.).